A 116-amino-acid chain; its full sequence is Staphylococcal complement inhibitor (116 aa).

Positions Met-1–Ala-31 are cleaved as a signal peptide. Positions Leu-62–Gly-79 are essential for activity.

The protein belongs to the SCIN family.

It localises to the secreted. Functionally, involved in countering the first line of host defense mechanisms. Efficiently inhibits opsonization, phagocytosis and killing of S.aureus by human neutrophils. Acts by binding and stabilizing human C3 convertases (C4b2a and C3bBb), leading to their inactivation. The convertases are no longer able to cleave complement C3, therefore preventing further C3b deposition on the bacterial surface and phagocytosis of the bacterium. Also prevents C5a-induced neutrophil responses. The polypeptide is Staphylococcal complement inhibitor (scn) (Staphylococcus aureus (strain Mu50 / ATCC 700699)).